The following is a 518-amino-acid chain: Cytochrome P450 monooxygenase psoD (518 aa).

Cys442 serves as a coordination point for heme.

This sequence belongs to the cytochrome P450 family. It depends on heme as a cofactor.

The protein operates within secondary metabolite biosynthesis. In terms of biological role, cytochrome P450 monooxygenase; part of the gene cluster that mediates the biosynthesis of pseurotin A, a competitive inhibitor of chitin synthase and an inducer of nerve-cell proliferation. The PKS-NRPS hybrid synthetase psoA is responsible for the biosynthesis of azaspirene, one of the first intermediates having the 1-oxa-7-azaspiro[4,4]-non-2-ene-4,6-dione core of pseurotin, via condensation of one acetyl-CoA, 4 malonyl-CoA, and a L-phenylalanine molecule. The dual-functional monooxygenase/methyltransferase psoF seems to be involved in the addition of the C3 methyl group onto the pseurotin scaffold. Azaspirene is then converted to synerazol through 4 steps including oxidation of C17 by the cytochrome P450 monooxygenase psoD, O-methylation of the hydroxy group of C8 by the methyltransferase psoC, and the trans-to-cis isomerization of the C13 olefin by the glutathione S-transferase psoE. The fourth step of synerazol production is performed by the dual-functional monooxygenase/methyltransferase psoF which seems to catalyze the epoxidation of the intermediate deepoxy-synerazol. Synerazol can be attacked by a water molecule nonenzymatically at two different positions to yield two diol products, pseurotin A and pseurotin D. The protein is Cytochrome P450 monooxygenase psoD of Aspergillus fumigatus (strain ATCC MYA-4609 / CBS 101355 / FGSC A1100 / Af293) (Neosartorya fumigata).